Here is a 306-residue protein sequence, read N- to C-terminus: D-alanine--D-alanine ligase (306 aa).

Residues glutamate 18 and serine 150 contribute to the active site. The ATP-grasp domain maps to 104 to 303; the sequence is KMLWKAFGLP…FEQLVVKILE (200 aa). An ATP-binding site is contributed by 134-189; the sequence is VAKLGLPLMVKPSLEGSSVGLTKVKAVEELKSAVEYALKFDNTILIEEWLAGDELT. Aspartate 257, glutamate 270, and asparagine 272 together coordinate Mg(2+). Serine 281 is a catalytic residue.

It belongs to the D-alanine--D-alanine ligase family. The cofactor is Mg(2+). Requires Mn(2+) as cofactor.

Its subcellular location is the cytoplasm. The enzyme catalyses 2 D-alanine + ATP = D-alanyl-D-alanine + ADP + phosphate + H(+). It participates in cell wall biogenesis; peptidoglycan biosynthesis. Its function is as follows. Cell wall formation. This Haemophilus influenzae (strain ATCC 51907 / DSM 11121 / KW20 / Rd) protein is D-alanine--D-alanine ligase.